The primary structure comprises 445 residues: tRNA-2-methylthio-N(6)-dimethylallyladenosine synthase (445 aa).

An MTTase N-terminal domain is found at 7–121 (KTFYIETFGC…LPEMLVQLEA (115 aa)). Residues Cys16, Cys52, Cys84, Cys158, Cys162, and Cys165 each contribute to the [4Fe-4S] cluster site. The region spanning 144–374 (RDNPHRAYLT…QEKQRAIQIR (231 aa)) is the Radical SAM core domain. The 67-residue stretch at 377–443 (AEMIGSIQEV…PNSLVGESAA (67 aa)) folds into the TRAM domain.

It belongs to the methylthiotransferase family. MiaB subfamily. In terms of assembly, monomer. [4Fe-4S] cluster serves as cofactor.

It is found in the cytoplasm. The enzyme catalyses N(6)-dimethylallyladenosine(37) in tRNA + (sulfur carrier)-SH + AH2 + 2 S-adenosyl-L-methionine = 2-methylsulfanyl-N(6)-dimethylallyladenosine(37) in tRNA + (sulfur carrier)-H + 5'-deoxyadenosine + L-methionine + A + S-adenosyl-L-homocysteine + 2 H(+). Functionally, catalyzes the methylthiolation of N6-(dimethylallyl)adenosine (i(6)A), leading to the formation of 2-methylthio-N6-(dimethylallyl)adenosine (ms(2)i(6)A) at position 37 in tRNAs that read codons beginning with uridine. The polypeptide is tRNA-2-methylthio-N(6)-dimethylallyladenosine synthase (Solibacter usitatus (strain Ellin6076)).